The primary structure comprises 169 residues: 16S rRNA aminocarboxypropyltransferase (169 aa).

S-adenosyl-L-methionine contacts are provided by threonine 17, leucine 67, leucine 90, and threonine 109.

It belongs to the TDD superfamily. TSR3 family.

It localises to the cytoplasm. The catalysed reaction is an N(1)-methylpseudouridine in rRNA + S-adenosyl-L-methionine = N(1)-methyl-N(3)-[(3S)-3-amino-3-carboxypropyl]pseudouridine in rRNA + S-methyl-5'-thioadenosine + H(+). Functionally, aminocarboxypropyltransferase that catalyzes the aminocarboxypropyl transfer on pseudouridine corresponding to position 914 in M.jannaschii 16S rRNA. It constitutes the last step in biosynthesis of the hypermodified N1-methyl-N3-(3-amino-3-carboxypropyl) pseudouridine (m1acp3-Psi). The polypeptide is 16S rRNA aminocarboxypropyltransferase (Methanothermobacter thermautotrophicus (strain ATCC 29096 / DSM 1053 / JCM 10044 / NBRC 100330 / Delta H) (Methanobacterium thermoautotrophicum)).